Consider the following 2283-residue polypeptide: DNA polymerase epsilon catalytic subunit A (2283 aa).

A disordered region spans residues 1 to 32 (MVLRNSGRRHPEPGADGEGSRDDGPSSSVSAL). Residues 9–24 (RHPEPGADGEGSRDDG) show a composition bias toward basic and acidic residues. A phosphoserine mark is found at Ser-1184, Ser-1296, and Ser-1316. Disordered regions lie at residues 1935-1968 (GQVK…GESE) and 2014-2041 (HSAP…TGSL). Residues 1936 to 1946 (QVKEQDSQARE) are compositionally biased toward basic and acidic residues. The segment covering 1947–1968 (ETDEEEEDKEKDEEEEGMGESE) has biased composition (acidic residues). Polar residues predominate over residues 2028 to 2037 (SQFSQESEGA). Zn(2+)-binding residues include Cys-2155, Cys-2158, Cys-2184, and Cys-2187. The CysA-type zinc-finger motif lies at 2155–2187 (CHSCNFCRDLDLCKDSSFSQDGAILPQWLCSNC). [4Fe-4S] cluster-binding residues include Cys-2218, Cys-2221, Cys-2233, and Cys-2235. The short motif at 2218–2235 (CLKCRGMKETHMPVYCSC) is the CysB motif element.

The protein belongs to the DNA polymerase type-B family. Component of the DNA polymerase epsilon complex consisting of four subunits: the catalytic subunit POLE and the accessory subunits POLE2, POLE3 and POLE4. Interacts with RAD17 and TOPBP1. It depends on [4Fe-4S] cluster as a cofactor.

It localises to the nucleus. The catalysed reaction is DNA(n) + a 2'-deoxyribonucleoside 5'-triphosphate = DNA(n+1) + diphosphate. Catalytic component of the DNA polymerase epsilon complex. Participates in chromosomal DNA replication. Required during synthesis of the leading DNA strands at the replication fork and binds at/or near replication origins and moves along DNA with the replication fork. Has 3'-5' proofreading exonuclease activity that corrects errors arising during DNA replication. It is also involved in DNA synthesis during DNA repair. The protein is DNA polymerase epsilon catalytic subunit A (Pole) of Mus musculus (Mouse).